A 384-amino-acid chain; its full sequence is Tryptophan--tRNA ligase (384 aa).

Residues Pro81–His89 carry the 'HIGH' region motif. The short motif at Lys252–Ser256 is the 'KMSKS' region element.

This sequence belongs to the class-I aminoacyl-tRNA synthetase family.

It localises to the cytoplasm. The enzyme catalyses tRNA(Trp) + L-tryptophan + ATP = L-tryptophyl-tRNA(Trp) + AMP + diphosphate + H(+). The sequence is that of Tryptophan--tRNA ligase from Thermococcus kodakarensis (strain ATCC BAA-918 / JCM 12380 / KOD1) (Pyrococcus kodakaraensis (strain KOD1)).